We begin with the raw amino-acid sequence, 92 residues long: Large ribosomal subunit protein bL27 (92 aa).

Residues 1–21 (MSKKKGVGSSRNGRDSESKRL) form a disordered region. The segment covering 12 to 21 (NGRDSESKRL) has biased composition (basic and acidic residues).

It belongs to the bacterial ribosomal protein bL27 family.

The sequence is that of Large ribosomal subunit protein bL27 from Halothermothrix orenii (strain H 168 / OCM 544 / DSM 9562).